Consider the following 427-residue polypeptide: Dihydroorotase (427 aa).

Zn(2+) contacts are provided by H60 and H62. Substrate is bound by residues 62-64 (HLR) and N94. Zn(2+) is bound by residues D152, H179, and H232. N278 provides a ligand contact to substrate. D305 contributes to the Zn(2+) binding site. The active site involves D305. Substrate-binding positions include H309 and 323–324 (FG).

The protein belongs to the metallo-dependent hydrolases superfamily. DHOase family. Class I DHOase subfamily. Zn(2+) serves as cofactor.

It catalyses the reaction (S)-dihydroorotate + H2O = N-carbamoyl-L-aspartate + H(+). Its pathway is pyrimidine metabolism; UMP biosynthesis via de novo pathway; (S)-dihydroorotate from bicarbonate: step 3/3. Catalyzes the reversible cyclization of carbamoyl aspartate to dihydroorotate. The sequence is that of Dihydroorotase from Geobacillus sp. (strain WCH70).